A 135-amino-acid chain; its full sequence is Small ribosomal subunit protein bS6 (135 aa).

A disordered region spans residues 99–135; it reads EKSAMLSHLDRNAHAGQDEERSRSPRRQRENAIERVE.

Belongs to the bacterial ribosomal protein bS6 family.

In terms of biological role, binds together with bS18 to 16S ribosomal RNA. The chain is Small ribosomal subunit protein bS6 from Bartonella tribocorum (strain CIP 105476 / IBS 506).